The sequence spans 240 residues: 1-(5-phosphoribosyl)-5-[(5-phosphoribosylamino)methylideneamino] imidazole-4-carboxamide isomerase (240 aa).

Catalysis depends on Asp8, which acts as the Proton acceptor. Asp129 acts as the Proton donor in catalysis.

This sequence belongs to the HisA/HisF family.

Its subcellular location is the cytoplasm. It catalyses the reaction 1-(5-phospho-beta-D-ribosyl)-5-[(5-phospho-beta-D-ribosylamino)methylideneamino]imidazole-4-carboxamide = 5-[(5-phospho-1-deoxy-D-ribulos-1-ylimino)methylamino]-1-(5-phospho-beta-D-ribosyl)imidazole-4-carboxamide. The protein operates within amino-acid biosynthesis; L-histidine biosynthesis; L-histidine from 5-phospho-alpha-D-ribose 1-diphosphate: step 4/9. In Herpetosiphon aurantiacus (strain ATCC 23779 / DSM 785 / 114-95), this protein is 1-(5-phosphoribosyl)-5-[(5-phosphoribosylamino)methylideneamino] imidazole-4-carboxamide isomerase.